Here is a 124-residue protein sequence, read N- to C-terminus: NAD(P)H-quinone oxidoreductase subunit 5, chloroplastic (124 aa).

The next 3 membrane-spanning stretches (helical) occupy residues 22–42, 44–64, and 91–111; these read TPIS…FLVA, LLPL…IGII, and LGYM…FHLI.

The protein belongs to the complex I subunit 5 family. NDH is composed of at least 16 different subunits, 5 of which are encoded in the nucleus.

It localises to the plastid. Its subcellular location is the chloroplast thylakoid membrane. The catalysed reaction is a plastoquinone + NADH + (n+1) H(+)(in) = a plastoquinol + NAD(+) + n H(+)(out). It catalyses the reaction a plastoquinone + NADPH + (n+1) H(+)(in) = a plastoquinol + NADP(+) + n H(+)(out). Functionally, NDH shuttles electrons from NAD(P)H:plastoquinone, via FMN and iron-sulfur (Fe-S) centers, to quinones in the photosynthetic chain and possibly in a chloroplast respiratory chain. The immediate electron acceptor for the enzyme in this species is believed to be plastoquinone. Couples the redox reaction to proton translocation, and thus conserves the redox energy in a proton gradient. The chain is NAD(P)H-quinone oxidoreductase subunit 5, chloroplastic (ndhF) from Pisum sativum (Garden pea).